A 192-amino-acid chain; its full sequence is UPF0312 protein YPK_1931 (192 aa).

The N-terminal stretch at 1–23 (MINKTLLGLSLGALMFTAGSAVA) is a signal peptide.

The protein belongs to the UPF0312 family. Type 1 subfamily.

The protein resides in the periplasm. This is UPF0312 protein YPK_1931 from Yersinia pseudotuberculosis serotype O:3 (strain YPIII).